The chain runs to 160 residues: Non-secretory ribonuclease (160 aa).

A signal peptide spans 1-27 (MVPKLFTSPICLLLLLGLMGVEGSLHA). C-linked (Man) tryptophan glycosylation is present at tryptophan 34. The active-site Proton acceptor is the histidine 42. Asparagine 44 carries an N-linked (GlcNAc...) asparagine glycan. 4 cysteine pairs are disulfide-bonded: cysteine 50-cysteine 110, cysteine 64-cysteine 122, cysteine 82-cysteine 137, and cysteine 89-cysteine 98. Tyrosine 60 carries the 3'-nitrotyrosine modification. 65-69 (KNQNT) serves as a coordination point for substrate. N-linked (GlcNAc...) asparagine glycans are attached at residues asparagine 92, asparagine 111, and asparagine 138. Histidine 155 serves as the catalytic Proton donor.

The protein belongs to the pancreatic ribonuclease family. In terms of assembly, interacts with and forms a tight 1:1 complex with RNH1. Dimerization of two such complexes may occur.

The protein localises to the lysosome. Its subcellular location is the cytoplasmic granule. The catalysed reaction is an [RNA] containing cytidine + H2O = an [RNA]-3'-cytidine-3'-phosphate + a 5'-hydroxy-ribonucleotide-3'-[RNA].. The enzyme catalyses an [RNA] containing uridine + H2O = an [RNA]-3'-uridine-3'-phosphate + a 5'-hydroxy-ribonucleotide-3'-[RNA].. Its function is as follows. This is a non-secretory ribonuclease. It is a pyrimidine specific nuclease with a slight preference for U. Cytotoxin and helminthotoxin. Possesses a wide variety of biological activities. The polypeptide is Non-secretory ribonuclease (RNASE2) (Macaca nemestrina (Pig-tailed macaque)).